A 101-amino-acid chain; its full sequence is Small ribosomal subunit protein uS14A (101 aa).

The tract at residues 47-66 (ALASLPRDSNPNRVTNRCAL) is disordered.

It belongs to the universal ribosomal protein uS14 family. Part of the 30S ribosomal subunit. Contacts proteins S3 and S10.

Its function is as follows. Binds 16S rRNA, required for the assembly of 30S particles and may also be responsible for determining the conformation of the 16S rRNA at the A site. In Myxococcus xanthus (strain DK1622), this protein is Small ribosomal subunit protein uS14A.